The chain runs to 254 residues: Thiazole synthase (254 aa).

K95 acts as the Schiff-base intermediate with DXP in catalysis. 1-deoxy-D-xylulose 5-phosphate is bound by residues G156, 182–183, and 204–205; these read AG and NT.

The protein belongs to the ThiG family. In terms of assembly, homotetramer. Forms heterodimers with either ThiH or ThiS.

Its subcellular location is the cytoplasm. The enzyme catalyses [ThiS sulfur-carrier protein]-C-terminal-Gly-aminoethanethioate + 2-iminoacetate + 1-deoxy-D-xylulose 5-phosphate = [ThiS sulfur-carrier protein]-C-terminal Gly-Gly + 2-[(2R,5Z)-2-carboxy-4-methylthiazol-5(2H)-ylidene]ethyl phosphate + 2 H2O + H(+). It participates in cofactor biosynthesis; thiamine diphosphate biosynthesis. Functionally, catalyzes the rearrangement of 1-deoxy-D-xylulose 5-phosphate (DXP) to produce the thiazole phosphate moiety of thiamine. Sulfur is provided by the thiocarboxylate moiety of the carrier protein ThiS. In vitro, sulfur can be provided by H(2)S. This is Thiazole synthase from Shewanella putrefaciens (strain CN-32 / ATCC BAA-453).